A 601-amino-acid polypeptide reads, in one-letter code: Cdc42-interacting protein 4 (601 aa).

The required for translocation to the plasma membrane in response to insulin, podosome formation and interaction with AKAP9 and microtubules stretch occupies residues 1–117 (MDWGTELWDQ…EMKQERKMHF (117 aa)). Residues 1-264 (MDWGTELWDQ…AANAVDPKND (264 aa)) form the F-BAR domain. Residues 67-259 (FSQQQSFVQI…EGMKVAANAV (193 aa)) adopt a coiled-coil conformation. 3 disordered regions span residues 280–358 (GDVE…GRDP), 390–420 (DFSHLPPEQQRKRLQQQLEERSRELQKEVDQ), and 478–543 (NRGD…SPIG). Residues 289 to 302 (QPMNRAPSDSSLGT) show a composition bias toward polar residues. Residues 293-537 (RAPSDSSLGT…TEFDEDFEEE (245 aa)) are interaction with CDC42. The tract at residues 293–601 (RAPSDSSLGT…PTSYLRVTLN (309 aa)) is interaction with PDE6G. Phosphoserine is present on residues Ser296, Ser298, and Ser299. The segment covering 314 to 329 (GRSRTKRWPFGKKNKP) has biased composition (basic residues). Ser335 carries the post-translational modification Phosphoserine. A compositionally biased stretch (low complexity) spans 336-346 (PLGGPVPSALP). A Phosphoserine modification is found at Ser351. Positions 388-481 (TEDFSHLPPE…ESRVLSNRGD (94 aa)) form a coiled coil. An REM-1 domain is found at 393–470 (HLPPEQQRKR…VQKYEAWLAE (78 aa)). The span at 407–420 (LEERSRELQKEVDQ) shows a compositional bias: basic and acidic residues. Residues 471–601 (AESRVLSNRG…PTSYLRVTLN (131 aa)) form a required for interaction with FASLG and localization to lysosomes region. Position 482 is a phosphoserine (Ser482). The tract at residues 487–541 (ARPPDPPTSAPPDSSSNSASQDTKESSEEPPSEESQDTPIYTEFDEDFEEEPTSP) is interaction with DNM2 and WASL. The span at 497 to 506 (PPDSSSNSAS) shows a compositional bias: low complexity. Residues 529 to 538 (EFDEDFEEEP) show a composition bias toward acidic residues. The segment at 529-601 (EFDEDFEEEP…PTSYLRVTLN (73 aa)) is interaction with DNM1 and WASL. A required for podosome formation region spans residues 538–601 (PTSPIGHCVA…PTSYLRVTLN (64 aa)). The SH3 domain occupies 540–601 (SPIGHCVAIY…PTSYLRVTLN (62 aa)). The segment at 544 to 601 (HCVAIYHFEGSSEGTISMAEGEDLSLMEEDKGDGWTRVRRKEGGEGYVPTSYLRVTLN) is interaction with WAS. Positions 546–601 (VAIYHFEGSSEGTISMAEGEDLSLMEEDKGDGWTRVRRKEGGEGYVPTSYLRVTLN) are interaction with ARHGAP17, DAAM1, DIAPH1 and DIAPH2.

This sequence belongs to the FNBP1 family. In terms of assembly, homodimerizes, the dimers can polymerize end-to-end to form filamentous structures. Interacts with AKAP9, ARHGAP17, DAAM1, DIAPH1, DIAPH2, DNM1, FASLG/FASL, GAPVD1, LYN, microtubules, PDE6G, SRC and WAS/WASP. Interacts with the ligand binding domain of the thyroid receptor (TR) in the presence of thyroid hormone. May interact with CTNNB1 and HD/HTT. Interacts specifically with GTP-bound CDC42 and RHOQ. Interacts with DNM2 and WASL. Tyrosine phosphorylated. Also phosphorylated by PKA.

Its subcellular location is the cytoplasm. It is found in the cytoskeleton. The protein localises to the cell cortex. The protein resides in the lysosome. It localises to the golgi apparatus. Its subcellular location is the cell membrane. It is found in the cell projection. The protein localises to the phagocytic cup. Its function is as follows. Required to coordinate membrane tubulation with reorganization of the actin cytoskeleton during endocytosis. Also acts as a link between CDC42 signaling and regulation of the actin cytoskeleton. Binds to lipids such as phosphatidylinositol 4,5-bisphosphate and phosphatidylserine and promotes membrane invagination and the formation of tubules. Also enhances actin polymerization in the vicinity of membrane tubules by recruiting WASL/N-WASP which in turn activates the Arp2/3 complex. Actin polymerization and dynamin may promote the fission of membrane tubules to form endocytic vesicles. Required for the formation of podosomes, actin-rich adhesion structures specific to monocyte-derived cells. Required for translocation of GLUT4 to the plasma membrane in response to insulin signaling. May be required for the lysosomal retention of FASLG/FASL. The polypeptide is Cdc42-interacting protein 4 (TRIP10) (Pongo abelii (Sumatran orangutan)).